We begin with the raw amino-acid sequence, 566 residues long: Proline--tRNA ligase (566 aa).

It belongs to the class-II aminoacyl-tRNA synthetase family. ProS type 1 subfamily. Homodimer.

The protein resides in the cytoplasm. It carries out the reaction tRNA(Pro) + L-proline + ATP = L-prolyl-tRNA(Pro) + AMP + diphosphate. Catalyzes the attachment of proline to tRNA(Pro) in a two-step reaction: proline is first activated by ATP to form Pro-AMP and then transferred to the acceptor end of tRNA(Pro). As ProRS can inadvertently accommodate and process non-cognate amino acids such as alanine and cysteine, to avoid such errors it has two additional distinct editing activities against alanine. One activity is designated as 'pretransfer' editing and involves the tRNA(Pro)-independent hydrolysis of activated Ala-AMP. The other activity is designated 'posttransfer' editing and involves deacylation of mischarged Ala-tRNA(Pro). The misacylated Cys-tRNA(Pro) is not edited by ProRS. In Bacillus cereus (strain AH187), this protein is Proline--tRNA ligase.